We begin with the raw amino-acid sequence, 563 residues long: Eukaryotic translation initiation factor 3 subunit D-1 (563 aa).

A disordered region spans residues 98-167; sequence VQKPPHQRGR…GPPPKMRESS (70 aa). Basic residues predominate over residues 100 to 121; it reads KPPHQRGRFRNMRNSRSGRGRN. Threonine 128 carries the post-translational modification Phosphothreonine. The tract at residues 291–305 is RNA gate; the sequence is EFDLLTVNETSVEPP.

It belongs to the eIF-3 subunit D family. As to quaternary structure, component of the eukaryotic translation initiation factor 3 (eIF-3) complex. The eIF-3 complex interacts with pix.

Its subcellular location is the cytoplasm. Its function is as follows. mRNA cap-binding component of the eukaryotic translation initiation factor 3 (eIF-3) complex, which is involved in protein synthesis of a specialized repertoire of mRNAs and, together with other initiation factors, stimulates binding of mRNA and methionyl-tRNAi to the 40S ribosome. The eIF-3 complex specifically targets and initiates translation of a subset of mRNAs involved in cell proliferation. In the eIF-3 complex, eif3d specifically recognizes and binds the 7-methylguanosine cap of a subset of mRNAs. This Drosophila mojavensis (Fruit fly) protein is Eukaryotic translation initiation factor 3 subunit D-1.